The following is a 59-amino-acid chain: Conorfamide-Ep1 (59 aa).

Positions 1 to 19 are cleaved as a signal peptide; sequence MSGCGFLLLALLLLVTVEA. Positions 20–25 are excised as a propeptide; sequence TKMEKK. I43 is modified (isoleucine amide). The propeptide occupies 45-59; sequence RRDMQSPLLSERLRF.

The protein belongs to the FARP (FMRFamide related peptide) family. Expressed by the venom duct.

It localises to the secreted. Neurotoxin that is active on vertebrates. When tested at high doses (10 uM), the toxin affects all zebrafish and mouse DRG neurons in culture, which could be an indication of an effect on a widely expressed receptor or ion channel found in both species. At low doses (1 uM), the effects of the toxin are confined to a specific subpopulation of zebrafish and mouse DRG neurons. In vivo, it induces long-lasting dramatic alterations in the locomotor behavior of zebrafish larvae. It rapidly induces hypoactivity and death of larvae at high doses and it causes hyperactivity at lower doses. In zebrafish adults, intramuscular injection causes the decrease of the movements and visited spaces. In mice, intracranial injection causes lethargy and prolonges sleeping phases and reduced movement. The polypeptide is Conorfamide-Ep1 (Conus episcopatus (Bishop's cone)).